A 482-amino-acid polypeptide reads, in one-letter code: Pup--protein ligase (482 aa).

Glutamate 16 serves as a coordination point for Mg(2+). Position 60 (arginine 60) interacts with ATP. Tyrosine 62 contacts Mg(2+). Residue aspartate 64 is the Proton acceptor of the active site. Glutamate 70 is a Mg(2+) binding site. ATP contacts are provided by threonine 73 and tryptophan 440.

The protein belongs to the Pup ligase/Pup deamidase family. Pup-conjugating enzyme subfamily.

The enzyme catalyses ATP + [prokaryotic ubiquitin-like protein]-L-glutamate + [protein]-L-lysine = ADP + phosphate + N(6)-([prokaryotic ubiquitin-like protein]-gamma-L-glutamyl)-[protein]-L-lysine.. It participates in protein degradation; proteasomal Pup-dependent pathway. The protein operates within protein modification; protein pupylation. In terms of biological role, catalyzes the covalent attachment of the prokaryotic ubiquitin-like protein modifier Pup to the proteasomal substrate proteins, thereby targeting them for proteasomal degradation. This tagging system is termed pupylation. The ligation reaction involves the side-chain carboxylate of the C-terminal glutamate of Pup and the side-chain amino group of a substrate lysine. In Corynebacterium glutamicum (strain R), this protein is Pup--protein ligase.